Consider the following 319-residue polypeptide: 4-hydroxy-3-methylbut-2-enyl diphosphate reductase (319 aa).

Residue C18 coordinates [4Fe-4S] cluster. Positions 47 and 81 each coordinate (2E)-4-hydroxy-3-methylbut-2-enyl diphosphate. Positions 47 and 81 each coordinate dimethylallyl diphosphate. Isopentenyl diphosphate is bound by residues H47 and H81. [4Fe-4S] cluster is bound at residue C103. Residue H131 coordinates (2E)-4-hydroxy-3-methylbut-2-enyl diphosphate. H131 contributes to the dimethylallyl diphosphate binding site. Isopentenyl diphosphate is bound at residue H131. E133 (proton donor) is an active-site residue. T172 is a binding site for (2E)-4-hydroxy-3-methylbut-2-enyl diphosphate. Position 202 (C202) interacts with [4Fe-4S] cluster. (2E)-4-hydroxy-3-methylbut-2-enyl diphosphate contacts are provided by S230, S231, N232, and S275. S230, S231, N232, and S275 together coordinate dimethylallyl diphosphate. Isopentenyl diphosphate is bound by residues S230, S231, N232, and S275.

It belongs to the IspH family. Requires [4Fe-4S] cluster as cofactor.

The catalysed reaction is isopentenyl diphosphate + 2 oxidized [2Fe-2S]-[ferredoxin] + H2O = (2E)-4-hydroxy-3-methylbut-2-enyl diphosphate + 2 reduced [2Fe-2S]-[ferredoxin] + 2 H(+). It carries out the reaction dimethylallyl diphosphate + 2 oxidized [2Fe-2S]-[ferredoxin] + H2O = (2E)-4-hydroxy-3-methylbut-2-enyl diphosphate + 2 reduced [2Fe-2S]-[ferredoxin] + 2 H(+). It participates in isoprenoid biosynthesis; dimethylallyl diphosphate biosynthesis; dimethylallyl diphosphate from (2E)-4-hydroxy-3-methylbutenyl diphosphate: step 1/1. Its pathway is isoprenoid biosynthesis; isopentenyl diphosphate biosynthesis via DXP pathway; isopentenyl diphosphate from 1-deoxy-D-xylulose 5-phosphate: step 6/6. In terms of biological role, catalyzes the conversion of 1-hydroxy-2-methyl-2-(E)-butenyl 4-diphosphate (HMBPP) into a mixture of isopentenyl diphosphate (IPP) and dimethylallyl diphosphate (DMAPP). Acts in the terminal step of the DOXP/MEP pathway for isoprenoid precursor biosynthesis. This chain is 4-hydroxy-3-methylbut-2-enyl diphosphate reductase, found in Beijerinckia indica subsp. indica (strain ATCC 9039 / DSM 1715 / NCIMB 8712).